We begin with the raw amino-acid sequence, 128 residues long: Small ribosomal subunit protein eS6 (128 aa).

The protein belongs to the eukaryotic ribosomal protein eS6 family.

The polypeptide is Small ribosomal subunit protein eS6 (Thermoplasma volcanium (strain ATCC 51530 / DSM 4299 / JCM 9571 / NBRC 15438 / GSS1)).